The primary structure comprises 61 residues: Small ribosomal subunit protein uS14B (61 aa).

4 residues coordinate Zn(2+): Cys-24, Cys-27, Cys-40, and Cys-43.

This sequence belongs to the universal ribosomal protein uS14 family. Zinc-binding uS14 subfamily. As to quaternary structure, part of the 30S ribosomal subunit. Contacts proteins S3 and S10. Zn(2+) serves as cofactor.

Its function is as follows. Binds 16S rRNA, required for the assembly of 30S particles and may also be responsible for determining the conformation of the 16S rRNA at the A site. This Pediococcus pentosaceus (strain ATCC 25745 / CCUG 21536 / LMG 10740 / 183-1w) protein is Small ribosomal subunit protein uS14B.